The primary structure comprises 863 residues: Receptor-like protein 9DC1 (863 aa).

A signal peptide spans methionine 1 to serine 21. The Extracellular segment spans residues serine 22–glutamine 812. Residues leucine 24–glutamine 90 form an N-cap region. N-linked (GlcNAc...) asparagine glycosylation is found at asparagine 71 and asparagine 108. An LRR 1; degenerate repeat occupies valine 91 to leucine 114. 2 LRR repeats span residues serine 115–glutamate 138 and serine 140–leucine 163. An LRR 4; degenerate repeat occupies serine 164–asparagine 190. Residues asparagine 190, asparagine 203, and asparagine 211 are each glycosylated (N-linked (GlcNAc...) asparagine). LRR repeat units lie at residues leucine 191 to serine 213, serine 214 to leucine 237, leucine 240 to serine 262, alanine 264 to histidine 286, leucine 287 to leucine 311, and threonine 312 to lysine 336. Asparagine 261 carries N-linked (GlcNAc...) asparagine glycosylation. N-linked (GlcNAc...) asparagine glycans are attached at residues asparagine 299 and asparagine 310. An LRR 11; degenerate repeat occupies leucine 337–phenylalanine 357. LRR repeat units lie at residues asparagine 358 to leucine 382, glutamine 383 to leucine 406, serine 408 to serine 428, lysine 429 to glutamine 452, asparagine 454 to leucine 476, lysine 477 to arginine 500, glutamate 502 to valine 524, glycine 525 to cysteine 549, tyrosine 551 to tyrosine 572, leucine 573 to asparagine 597, phenylalanine 599 to asparagine 623, leucine 667 to aspartate 690, leucine 691 to asparagine 714, leucine 715 to leucine 739, and phenylalanine 741 to glycine 759. Asparagine 378, asparagine 396, and asparagine 416 each carry an N-linked (GlcNAc...) asparagine glycan. Residue asparagine 464 is glycosylated (N-linked (GlcNAc...) asparagine). An N-linked (GlcNAc...) asparagine glycan is attached at asparagine 519. Residue asparagine 563 is glycosylated (N-linked (GlcNAc...) asparagine). N-linked (GlcNAc...) asparagine glycans are attached at residues asparagine 674, asparagine 698, and asparagine 714. Asparagine 746 and asparagine 767 each carry an N-linked (GlcNAc...) asparagine glycan. Positions lysine 760 to glutamine 812 are C-cap/acidic domain. A helical transmembrane segment spans residues glycine 813–tryptophan 833. Residues serine 834 to tyrosine 863 lie on the Cytoplasmic side of the membrane.

It belongs to the RLP family.

It is found in the cell membrane. In terms of biological role, involved in plant defense. Confers resistance to the fungal pathogen C.fulvum through recognition of the AVR9 elicitor protein. The polypeptide is Receptor-like protein 9DC1 (Solanum pimpinellifolium (Currant tomato)).